The chain runs to 510 residues: Cytochrome P450 monooxygenase ptmK (510 aa).

Residues Ile2–Val22 form a helical membrane-spanning segment. N-linked (GlcNAc...) asparagine glycans are attached at residues Asn313, Asn408, and Asn443. Cys456 provides a ligand contact to heme.

The protein belongs to the cytochrome P450 family. Requires heme as cofactor.

It localises to the membrane. The protein operates within secondary metabolite biosynthesis. In terms of biological role, cytochrome P450 monooxygenase; part of the gene cluster that mediates the biosynthesis of the indole diterpenes penitrems. The geranylgeranyl diphosphate (GGPP) synthase ptmG catalyzes the first step in penitrem biosynthesis via conversion of farnesyl pyrophosphate and isopentyl pyrophosphate into geranylgeranyl pyrophosphate (GGPP). Condensation of indole-3-glycerol phosphate with GGPP by the prenyl transferase ptmC then forms 3-geranylgeranylindole (3-GGI). Epoxidation by the FAD-dependent monooxygenase ptmM leads to a epoxidized-GGI that is substrate of the terpene cyclase ptmB for cyclization to yield paspaline. Paspaline is subsequently converted to 13-desoxypaxilline by the cytochrome P450 monooxygenase ptmP, the latter being then converted to paxilline by the cytochrome P450 monooxygenase ptmQ. Paxilline is converted to beta-paxitriol via C-10 ketoreduction by the short-chain dehydrogenase ptmH which can be monoprenylated at the C-20 by the indole diterpene prenyltransferase ptmD. A two-step elimination (acetylation and elimination) process performed by the O-acetyltransferase ptmV and ptmI leads to the production of the prenylated form of penijanthine. The FAD-linked oxidoreductase ptmO then converts the prenylated form of penijanthine into PC-M5 which is in turn transformed into PC-M4 by the aromatic dimethylallyltransferase ptmE. Five sequential oxidative transformations performed by the cytochrome P450 monooxygenases ptmK, ptmU, ptmL, ptmN and ptmJ yield the various penitrem compounds. PtmK, ptmU and ptmM are involved in the formation of the key bicyclic ring of penitrem C via the formation of the intermediates secopenitrem D and penitrem D. PtmL catalyzes the epoxidation of penitrem D and C to yield penitrem B and F, respectively. PtmJ catalyzes the last benzylic hydroxylation to convert penitrem B to prenitrem E and penitrem F to penitrem A. In Penicillium ochrochloron, this protein is Cytochrome P450 monooxygenase ptmK.